Here is a 123-residue protein sequence, read N- to C-terminus: Steroid Delta-isomerase (123 aa).

Y12 acts as the Proton donor in catalysis. Residue D36 is the Proton acceptor of the active site. Substrate is bound at residue D96.

As to quaternary structure, homodimer.

It carries out the reaction a 3-oxo-Delta(5)-steroid = a 3-oxo-Delta(4)-steroid. This is Steroid Delta-isomerase (ksdI) from Nocardioides simplex (Arthrobacter simplex).